A 250-amino-acid polypeptide reads, in one-letter code: tRNA pseudouridine synthase A (250 aa).

Aspartate 53 functions as the Nucleophile in the catalytic mechanism. Tyrosine 111 provides a ligand contact to substrate.

It belongs to the tRNA pseudouridine synthase TruA family. In terms of assembly, homodimer.

The catalysed reaction is uridine(38/39/40) in tRNA = pseudouridine(38/39/40) in tRNA. Formation of pseudouridine at positions 38, 39 and 40 in the anticodon stem and loop of transfer RNAs. This chain is tRNA pseudouridine synthase A, found in Streptococcus uberis (strain ATCC BAA-854 / 0140J).